A 406-amino-acid chain; its full sequence is 8-amino-7-oxononanoate synthase (406 aa).

Arg21 contributes to the substrate binding site. 112-113 serves as a coordination point for pyridoxal 5'-phosphate; the sequence is GY. His137 is a substrate binding site. Residues Ser183, His211, and Thr239 each contribute to the pyridoxal 5'-phosphate site. An N6-(pyridoxal phosphate)lysine modification is found at Lys242. Position 358 (Thr358) interacts with substrate.

Belongs to the class-II pyridoxal-phosphate-dependent aminotransferase family. BioF subfamily. Homodimer. Pyridoxal 5'-phosphate serves as cofactor.

It catalyses the reaction 6-carboxyhexanoyl-[ACP] + L-alanine + H(+) = (8S)-8-amino-7-oxononanoate + holo-[ACP] + CO2. It participates in cofactor biosynthesis; biotin biosynthesis. Its function is as follows. Catalyzes the decarboxylative condensation of pimeloyl-[acyl-carrier protein] and L-alanine to produce 8-amino-7-oxononanoate (AON), [acyl-carrier protein], and carbon dioxide. In Burkholderia orbicola (strain MC0-3), this protein is 8-amino-7-oxononanoate synthase.